The primary structure comprises 121 residues: Large ribosomal subunit protein bL19 (121 aa).

This sequence belongs to the bacterial ribosomal protein bL19 family.

Its function is as follows. This protein is located at the 30S-50S ribosomal subunit interface and may play a role in the structure and function of the aminoacyl-tRNA binding site. The protein is Large ribosomal subunit protein bL19 of Borreliella burgdorferi (strain ZS7) (Borrelia burgdorferi).